We begin with the raw amino-acid sequence, 467 residues long: Neutral protease 2 homolog NFIA_031120 (467 aa).

The first 19 residues, methionine 1 to alanine 19, serve as a signal peptide directing secretion. The propeptide occupies leucine 20–arginine 172. Disulfide bonds link cysteine 179-cysteine 251 and cysteine 258-cysteine 276. Zn(2+) is bound at residue histidine 300. The active site involves glutamate 301. The Zn(2+) site is built by histidine 304 and aspartate 315. The segment covering tryptophan 359–glycine 451 has biased composition (polar residues). The disordered stretch occupies residues tryptophan 359–alanine 467.

Belongs to the peptidase M35 family. Zn(2+) serves as cofactor.

It localises to the secreted. It catalyses the reaction Preferential cleavage of bonds with hydrophobic residues in P1'. Also 3-Asn-|-Gln-4 and 8-Gly-|-Ser-9 bonds in insulin B chain.. Secreted metalloproteinase that allows assimilation of proteinaceous substrates. Shows high activities on basic nuclear substrates such as histone and protamine. This Neosartorya fischeri (strain ATCC 1020 / DSM 3700 / CBS 544.65 / FGSC A1164 / JCM 1740 / NRRL 181 / WB 181) (Aspergillus fischerianus) protein is Neutral protease 2 homolog NFIA_031120.